The chain runs to 118 residues: Small ribosomal subunit protein uS13 (118 aa).

The segment at 94-118 (GLPLRGQRTKTNARTRKGRRKGTSS) is disordered.

It belongs to the universal ribosomal protein uS13 family. Part of the 30S ribosomal subunit. Forms a loose heterodimer with protein S19. Forms two bridges to the 50S subunit in the 70S ribosome.

In terms of biological role, located at the top of the head of the 30S subunit, it contacts several helices of the 16S rRNA. In the 70S ribosome it contacts the 23S rRNA (bridge B1a) and protein L5 of the 50S subunit (bridge B1b), connecting the 2 subunits; these bridges are implicated in subunit movement. Contacts the tRNAs in the A and P-sites. In Legionella pneumophila (strain Paris), this protein is Small ribosomal subunit protein uS13.